Reading from the N-terminus, the 536-residue chain is Prickle planar cell polarity protein 3-B (536 aa).

In terms of domain architecture, PET spans 66-175 (SGSQRDSLCD…CVRPISGTMS (110 aa)). LIM zinc-binding domains follow at residues 177 to 241 (TVCQ…ELKR), 242 to 302 (PRCL…LYAQ), and 305 to 366 (DSCG…HTKS). Positions 418–536 (PTQAAPARSL…KKKDKSCFLS (119 aa)) are disordered. The span at 438–448 (FSRECPNRRSL) shows a compositional bias: basic and acidic residues. The span at 450–467 (DLSSHTRTPTRVTFQLPS) shows a compositional bias: polar residues. Residues 474–487 (SISFSRPSFTSSSS) are compositionally biased toward low complexity.

The protein belongs to the prickle / espinas / testin family. As to quaternary structure, interacts with vangl2 via its C-terminus. The vangl2-dependent membrane recruitment of prickle3 is a prerequisite for its polarization. Interacts with wtip. Wtip is involved in the recruitment of prickle3 to the basal body.

The protein localises to the cytoplasm. The protein resides in the cell membrane. Its subcellular location is the mitochondrion. Involved in the planar cell polarity (PCP) pathway that is essential for the polarization of epithelial cells during morphogenetic processes, including gastrulation and neurulation. PCP is maintained by two molecular modules, the global and the core modules. Proteins of the core module include the proteins Frizzled (Fz), Disheveled (Dsh), Van Gogh (Vang), Prickle (Pk), Flamingo (Fmi, Celsr) and Diego (Dgo). The core module proteins develop subcellular asymmetry, accumulating in two groups on opposite sides of epithelial cells. Distinct proximal (Vang, Pk and Fmi) and distal (Fz, Dsh, Dgo and Fmi) complexes segregate to opposite sides of the cell, where they interact with the opposite complex in the neighboring cell at or near the adherents junctions. Directional information to orient polarization with respect to the tissue axes is provided by the global module which involves Wnt proteins. Involved in the organization of the basal body. Involved in cilia growth and positioning. Required for proper assembly, stability, and function of mitochondrial membrane ATP synthase (mitochondrial complex V). This chain is Prickle planar cell polarity protein 3-B (prickle3-b), found in Xenopus laevis (African clawed frog).